The following is a 134-amino-acid chain: Small ribosomal subunit protein uS8 (134 aa).

Belongs to the universal ribosomal protein uS8 family. Part of the 30S ribosomal subunit. Contacts proteins S5 and S12.

One of the primary rRNA binding proteins, it binds directly to 16S rRNA central domain where it helps coordinate assembly of the platform of the 30S subunit. This is Small ribosomal subunit protein uS8 from Thermotoga sp. (strain RQ2).